The sequence spans 75 residues: Large ribosomal subunit protein bL28 (75 aa).

The protein belongs to the bacterial ribosomal protein bL28 family.

In Baumannia cicadellinicola subsp. Homalodisca coagulata, this protein is Large ribosomal subunit protein bL28.